Reading from the N-terminus, the 428-residue chain is Enolase (428 aa).

A (2R)-2-phosphoglycerate-binding site is contributed by Gln163. Glu205 acts as the Proton donor in catalysis. 3 residues coordinate Mg(2+): Asp242, Glu286, and Asp313. (2R)-2-phosphoglycerate-binding residues include Lys338, Arg367, Ser368, and Lys389. Lys338 serves as the catalytic Proton acceptor.

Belongs to the enolase family. Mg(2+) serves as cofactor.

It is found in the cytoplasm. The protein localises to the secreted. Its subcellular location is the cell surface. It carries out the reaction (2R)-2-phosphoglycerate = phosphoenolpyruvate + H2O. The protein operates within carbohydrate degradation; glycolysis; pyruvate from D-glyceraldehyde 3-phosphate: step 4/5. Catalyzes the reversible conversion of 2-phosphoglycerate (2-PG) into phosphoenolpyruvate (PEP). It is essential for the degradation of carbohydrates via glycolysis. This is Enolase from Verminephrobacter eiseniae (strain EF01-2).